The chain runs to 631 residues: Phosphomethylpyrimidine synthase (631 aa).

Substrate contacts are provided by residues N239, M268, Y297, H333, S353–G355, D394–R397, and E433. A Zn(2+)-binding site is contributed by H437. A substrate-binding site is contributed by Y460. Residue H501 participates in Zn(2+) binding. Residues C581, C584, and C589 each coordinate [4Fe-4S] cluster.

Belongs to the ThiC family. In terms of assembly, homodimer. It depends on [4Fe-4S] cluster as a cofactor.

The catalysed reaction is 5-amino-1-(5-phospho-beta-D-ribosyl)imidazole + S-adenosyl-L-methionine = 4-amino-2-methyl-5-(phosphooxymethyl)pyrimidine + CO + 5'-deoxyadenosine + formate + L-methionine + 3 H(+). Its pathway is cofactor biosynthesis; thiamine diphosphate biosynthesis. In terms of biological role, catalyzes the synthesis of the hydroxymethylpyrimidine phosphate (HMP-P) moiety of thiamine from aminoimidazole ribotide (AIR) in a radical S-adenosyl-L-methionine (SAM)-dependent reaction. This is Phosphomethylpyrimidine synthase from Salmonella paratyphi A (strain AKU_12601).